The following is a 249-amino-acid chain: Cytoplasmic envelopment protein 1 (249 aa).

This sequence belongs to the herpesviridae cytoplasmic envelopment protein 1 family.

Its subcellular location is the virion. The protein localises to the virion tegument. It localises to the host cytoplasm. The protein resides in the host Golgi apparatus. In terms of biological role, plays a critical role in cytoplasmic virus egress. Participates in the final step of tegumentation and envelope acquisition within the host cytoplasm. This is Cytoplasmic envelopment protein 1 (U75) from Homo sapiens (Human).